Here is a 136-residue protein sequence, read N- to C-terminus: Large ribosomal subunit protein uL16c (136 aa).

The protein belongs to the universal ribosomal protein uL16 family. In terms of assembly, part of the 50S ribosomal subunit.

Its subcellular location is the plastid. The protein resides in the chloroplast. The protein is Large ribosomal subunit protein uL16c of Chlamydomonas sp. (strain WXM).